The sequence spans 437 residues: O-methyltransferase 10 (437 aa).

Residues glycine 259, glutamate 282, asparagine 315, and methionine 316 each coordinate S-adenosyl-L-methionine. Histidine 335 (proton acceptor) is an active-site residue.

The protein belongs to the class I-like SAM-binding methyltransferase superfamily. Cation-independent O-methyltransferase family. COMT subfamily.

The catalysed reaction is (3,5-dichloro-2,4,6-trihydroxyphenyl)hexan-1-one + S-adenosyl-L-methionine = 1-(3,5-dichloro-2,6-dihydroxy-4-methoxyphenyl)hexan-1-one + S-adenosyl-L-homocysteine + H(+). This Dictyostelium discoideum (Social amoeba) protein is O-methyltransferase 10 (omt10).